The following is a 310-amino-acid chain: Probable cobalamin biosynthesis protein CobD (310 aa).

The next 5 helical transmembrane spans lie at 53–73 (LVFG…IFFT), 80–100 (LISN…FSIG), 157–177 (DSII…AFIY), 215–235 (IAGI…VPAI), and 289–309 (AVDY…FNLI).

This sequence belongs to the CobD/CbiB family.

Its subcellular location is the cell membrane. It participates in cofactor biosynthesis; adenosylcobalamin biosynthesis. In terms of biological role, converts cobyric acid to cobinamide by the addition of aminopropanol on the F carboxylic group. In Methanococcus vannielii (strain ATCC 35089 / DSM 1224 / JCM 13029 / OCM 148 / SB), this protein is Probable cobalamin biosynthesis protein CobD.